A 361-amino-acid polypeptide reads, in one-letter code: Nicotinate-nucleotide--dimethylbenzimidazole phosphoribosyltransferase (361 aa).

Glutamate 315 serves as the catalytic Proton acceptor.

Belongs to the CobT family.

The enzyme catalyses 5,6-dimethylbenzimidazole + nicotinate beta-D-ribonucleotide = alpha-ribazole 5'-phosphate + nicotinate + H(+). It functions in the pathway nucleoside biosynthesis; alpha-ribazole biosynthesis; alpha-ribazole from 5,6-dimethylbenzimidazole: step 1/2. Functionally, catalyzes the synthesis of alpha-ribazole-5'-phosphate from nicotinate mononucleotide (NAMN) and 5,6-dimethylbenzimidazole (DMB). The protein is Nicotinate-nucleotide--dimethylbenzimidazole phosphoribosyltransferase of Clostridium perfringens (strain ATCC 13124 / DSM 756 / JCM 1290 / NCIMB 6125 / NCTC 8237 / Type A).